The primary structure comprises 96 residues: Large ribosomal subunit protein bL28 (96 aa).

A disordered region spans residues 1-24 (MSRSCELTGKGVQSGHNVSHANNK).

It belongs to the bacterial ribosomal protein bL28 family.

This is Large ribosomal subunit protein bL28 from Sinorhizobium fredii (strain NBRC 101917 / NGR234).